Reading from the N-terminus, the 103-residue chain is Cell division protein FtsB (103 aa).

Topologically, residues 1 to 3 (MGK) are cytoplasmic. A helical transmembrane segment spans residues 4–21 (LTLLLLAILVWLQYSLWF). Over 22–103 (GKNGIHDYTR…RAQSAGQNNR (82 aa)) the chain is Periplasmic. Residues 31–71 (RVNDDVAAQQATNAKLKARNDQLFAEIDDLNGGQEALEERA) are a coiled coil.

Belongs to the FtsB family. In terms of assembly, part of a complex composed of FtsB, FtsL and FtsQ.

It localises to the cell inner membrane. Functionally, essential cell division protein. May link together the upstream cell division proteins, which are predominantly cytoplasmic, with the downstream cell division proteins, which are predominantly periplasmic. This chain is Cell division protein FtsB, found in Escherichia coli O157:H7.